The following is a 472-amino-acid chain: MKFSRENMKWVFPEIKTTQNFLSPSSLPQEPPLSLRSSANFDLNSKISPSILLIIIILSIIFFISGLLHLLVRFLLTPSSRDREDYFDNVTALQGQLQQLFHLHDSGVDQSFIDTLPVFHYKSIIGLKNYPFDCAVCLCEFETEDKLRLLPKCSHAFHMDCIDTWLLSHSTCPLCRSSLLSDLSSHQDPRSSFLLVLESASDHSSREIGGDRDSAACVAANDDIDVSSAHLGLVGNNDLGSTRIDSGHGDQYLDGELGGSVGKVVPFSVKLGKFRNIDIGEGTSSNNNIGNSSSLDERRCFSMGSYEYIMDEETTLKVHVSTKKQSSKNRGLPGHRTAMSECGFDPTGRLKFSGSGSMRIVEEAAEKNVVERESFSVSKIWLRGKKEKHSKVQGKEDSSLVSSSSGRAFSFRLSNQRNHPDAMIESGCEEDNQKCENSESLETKTPSFARRTMLWLAGRQNKVVHSSSSTNV.

A helical membrane pass occupies residues isoleucine 51–leucine 71. The segment at cysteine 134–arginine 176 adopts an RING-type; atypical zinc-finger fold. Positions valine 320 to serine 340 are disordered.

It belongs to the RING-type zinc finger family. ATL subfamily.

The protein resides in the membrane. The catalysed reaction is S-ubiquitinyl-[E2 ubiquitin-conjugating enzyme]-L-cysteine + [acceptor protein]-L-lysine = [E2 ubiquitin-conjugating enzyme]-L-cysteine + N(6)-ubiquitinyl-[acceptor protein]-L-lysine.. It participates in protein modification; protein ubiquitination. The chain is RING-H2 finger protein ATL13 (ATL13) from Arabidopsis thaliana (Mouse-ear cress).